Consider the following 631-residue polypeptide: Bromodomain-containing protein 9 (631 aa).

2 disordered regions span residues 1–26 and 39–116; these read MGKK…PLEK and VTEL…TLPK. 2 stretches are compositionally biased toward basic and acidic residues: residues 9–26 and 50–63; these read RPEW…PLEK and SYYD…WERH. Residues 64-73 are compositionally biased toward basic residues; the sequence is KEKKKKKKKK. Positions 74–85 are enriched in basic and acidic residues; it reads SEKEKYADDDER. Residues 86–96 are compositionally biased toward basic residues; that stretch reads RRRKEEKKKKR. A Bromo domain is found at 166–270; sequence NEATPHQQLL…HTGFKMMSKQ (105 aa). A histone H4K5ac H4K8ac and histone H4K5bu H4K8bu binding region spans residues 244–246; sequence VYN. Positions 571–631 are disordered; sequence ASVDRVGSRP…SPEPGSTANS (61 aa). Over residues 581 to 590 the composition is skewed to low complexity; that stretch reads SSNLSSLSNA.

Binds acetylated histones H3 and H4. Binds butyrylated histone H4.

The protein localises to the nucleus. In terms of biological role, plays a role in chromatin remodeling and regulation of transcription. Acts as a chromatin reader that recognizes and binds acylated histones: binds histones that are acetylated and/or butyrylated. This chain is Bromodomain-containing protein 9 (brd9), found in Danio rerio (Zebrafish).